Here is a 132-residue protein sequence, read N- to C-terminus: Small ribosomal subunit protein uS8 (132 aa).

This sequence belongs to the universal ribosomal protein uS8 family. In terms of assembly, part of the 30S ribosomal subunit. Contacts proteins S5 and S12.

One of the primary rRNA binding proteins, it binds directly to 16S rRNA central domain where it helps coordinate assembly of the platform of the 30S subunit. This is Small ribosomal subunit protein uS8 from Mycobacterium marinum (strain ATCC BAA-535 / M).